Consider the following 351-residue polypeptide: UDP-3-O-acylglucosamine N-acyltransferase (351 aa).

Histidine 257 (proton acceptor) is an active-site residue.

Belongs to the transferase hexapeptide repeat family. LpxD subfamily. In terms of assembly, homotrimer.

It catalyses the reaction a UDP-3-O-[(3R)-3-hydroxyacyl]-alpha-D-glucosamine + a (3R)-hydroxyacyl-[ACP] = a UDP-2-N,3-O-bis[(3R)-3-hydroxyacyl]-alpha-D-glucosamine + holo-[ACP] + H(+). Its pathway is bacterial outer membrane biogenesis; LPS lipid A biosynthesis. Catalyzes the N-acylation of UDP-3-O-acylglucosamine using 3-hydroxyacyl-ACP as the acyl donor. Is involved in the biosynthesis of lipid A, a phosphorylated glycolipid that anchors the lipopolysaccharide to the outer membrane of the cell. This Brucella abortus (strain S19) protein is UDP-3-O-acylglucosamine N-acyltransferase.